A 348-amino-acid polypeptide reads, in one-letter code: Protein RecA (348 aa).

64 to 71 (GPESSGKT) is a binding site for ATP.

This sequence belongs to the RecA family. In terms of assembly, monomer; forms higher-order oligomers. Interacts with RecU. Interacts with DprA (smf). Interacts with RecD2.

The protein localises to the cytoplasm. It is found in the nucleoid. Its function is as follows. Multifunctional protein involved in homologous recombination, DNA repair and competence. Can catalyze the hydrolysis of (d)ATP in the presence of single-stranded (ss)DNA; prefers dATP at least in vitro, catalyzes the dATP-dependent uptake of ssDNA by duplex DNA, and the dATP-dependent hybridization of homologous ssDNA (strand exchange). RecA-ATP cannot catalyze homologous DNA strand exchange; SsbA and DprA activate strand exchange by RecA-ATP. It interacts with LexA causing its activation and leading to its autocatalytic cleavage. Hydrolysis of ATP in the presence of ssDNA is partially inhibited by RecU. Required for DNA transformation; protects transforming DNA from degradation, possibly in combination with DprA. Blocks replication of both leading and lagging strand DNA in the presence of RecO and SsbA; RecD2 is able to overcome this blockage. Recruited to repair centers (RCs), foci that are the site of double-stranded DNA break(s), after RecN. Concomitant with the appearance of RecO at the RCs, RecA forms threads that extend from RCs toward the opposite cell half, possibly searching for sequence homology along the sister chromosome. The threads disappear after about 2 hours. Thread formation is absolutely dependent on RecJ or AadAB. Thread formation is also dependent on RarA. This Bacillus subtilis (strain 168) protein is Protein RecA.